The primary structure comprises 342 residues: MSGFSPASEVLLRHSDDFTESRVLFAGDMQDDLPARFDTAQSRAHTQQFHHWQVLSKPMGDNARYGLVADAEIVADSDTLIYYWPKNKPEAQFQLMNLLSLLPVGTDVFVVGENRSGVRSAEAMLEAHCPLNKVDSARRCGLYHGRLEKQPEFNADGWWGEYQVDDLTIKTLPGVFSRDGLDVGSDLLLSTLSPHTKGKVLDVGCGAGVLAAVLASHSPKVRLTLCDVSAPAVEASRATLAANGFEGEVVASNVFSEIKGRFDMIISNPPFHDGMETSFEAAQTLIRSAVRHLNIGGELRIVANAFLPYPNVLDETFGNHEVLAQTGRFKVYRAVMGRNAKR.

This sequence belongs to the methyltransferase superfamily. RsmC family. In terms of assembly, monomer.

It is found in the cytoplasm. It carries out the reaction guanosine(1207) in 16S rRNA + S-adenosyl-L-methionine = N(2)-methylguanosine(1207) in 16S rRNA + S-adenosyl-L-homocysteine + H(+). Specifically methylates the guanine in position 1207 of 16S rRNA in the 30S particle. This Cronobacter sakazakii (strain ATCC BAA-894) (Enterobacter sakazakii) protein is Ribosomal RNA small subunit methyltransferase C.